The chain runs to 1294 residues: Voltage-gated inwardly rectifying potassium channel KCNH2 (1294 aa).

The Cytoplasmic segment spans residues 1–377; the sequence is RKFIIANARV…RIHRWTILHY (377 aa). The region spanning 15 to 44 is the PAS domain; the sequence is VIYCNDGFCELCGYSRAEVMQRPCTCDFLH. The PAC domain occupies 66–118; it reads RKVEIAFYRKDGSCFLCLVDVVPVKNEDGAVIMFILNFEVVMEKDMVGSPARD. The tract at residues 207–258 is disordered; the sequence is LVAPGSPPSSVPGPPHTSPRAHSLNPDASGSSCSLARTRSRESCASVRRASS. The segment covering 211 to 223 has biased composition (pro residues); sequence GSPPSSVPGPPHT. Phosphoserine is present on residues serine 212 and serine 216. Positions 232–243 are enriched in polar residues; that stretch reads PDASGSSCSLAR. Residues serine 257, serine 258, serine 294, and serine 325 each carry the phosphoserine modification. Residues 378-398 traverse the membrane as a helical segment; that stretch reads SPFKAVWDWLILLLVIYTAVF. The Extracellular segment spans residues 399 to 424; it reads TPYSAAFLLKEPEEDAQTADCGYACQ. The helical transmembrane segment at 425-445 threads the bilayer; the sequence is PLAVVDLIVDIMFIVDILINF. Residues 446–469 are Cytoplasmic-facing; sequence RTTYVNANEEVVSHPGRIAVHYFK. A helical membrane pass occupies residues 470-490; the sequence is GWFLIDMVAAIPFDLLIFGSG. Residues 491–494 lie on the Extracellular side of the membrane; sequence SEEL. Residues 495–515 traverse the membrane as a helical; Voltage-sensor segment; the sequence is IGLLKTARLLRLVRVARKLDR. The Cytoplasmic portion of the chain corresponds to 516–521; it reads YSEYGA. Residues 522-542 form a helical membrane-spanning segment; it reads AVLFLLMCTFALIAHWLACIW. Topologically, residues 543 to 585 are extracellular; sequence YAIGNMEQPDMNSRIGWLHNLGDQIGKPYNSSGLGGPSIKDKY. Residues 586–606 constitute an intramembrane region (pore-forming); sequence VTALYFTFSSLTSVGFGNVSP. The short motif at 598–603 is the Selectivity filter element; it reads SVGFGN. Residues 607-612 are Extracellular-facing; sequence NTNSEK. The helical transmembrane segment at 613 to 633 threads the bilayer; it reads IFSICVMLIGSLMYASIFGNV. The Cytoplasmic portion of the chain corresponds to 634–1294; that stretch reads SAIIQRLYSG…IAHWLACIWY (661 aa). The interval 716 to 816 is cNMP-binding domain; it reads PFRGATKGCL…IHRDDLLEVL (101 aa). Positions 844–956 are disordered; the sequence is GSPGSTELEG…LTEDGDKSDT (113 aa). Serine 845 and serine 848 each carry phosphoserine. Over residues 857–866 the composition is skewed to basic residues; that stretch reads RQRRRKLSFR. The span at 902-913 shows a compositional bias: low complexity; sequence GDSPSSGPSSPE. Omega-N-methylarginine is present on arginine 987. Positions 1008-1035 form a coiled coil; sequence RGDVESRLDALQRQLNRLETRLSADMAT. Residue serine 1110 is modified to Phosphoserine.

It belongs to the potassium channel family. H (Eag) (TC 1.A.1.20) subfamily. Kv11.1/KCNH2 sub-subfamily. As to quaternary structure, the potassium channel is probably composed of a homo- or heterotetrameric complex of pore-forming alpha subunits that can associate with modulating beta subunits. Interacts with DNAJB12 and DNAJB14; chaperones DNAJB12 and DNAJB14 promote tetramerization. Heteromultimer with KCNH6/ERG2 and KCNH7/ERG3. Interacts with ALG10B. Forms a stable complex with KCNE1 or KCNE2, and that this heteromultimerization regulates Inward rectifier potassium channel activity. Interacts with CANX. The core-glycosylated, but not the fully glycosylated form interacts with RNF207. Interacts with NDFIP1 and NDFIP2; this interaction decreases the cell membrane expression by targeting KCNH2, through interaction with NEDD4L, for the degradation through the multivesicular bodies (MVBs)-lysosomal pathway. Post-translationally, phosphorylated on serine and threonine residues. Phosphorylation by PKA inhibits ion conduction. In terms of tissue distribution, highly expressed in heart and brain.

It is found in the cell membrane. The enzyme catalyses K(+)(in) = K(+)(out). Pore-forming (alpha) subunit of voltage-gated inwardly rectifying potassium channel. Characterized by unusual gating kinetics by producing relatively small outward currents during membrane depolarization and large inward currents during subsequent repolarization which reflect a rapid inactivation during depolarization and quick recovery from inactivation but slow deactivation (closing) during repolarization. Channel properties are modulated by cAMP and subunit assembly. Forms a stable complex with KCNE1 or KCNE2, and that this heteromultimerization regulates inward rectifier potassium channel activity. The chain is Voltage-gated inwardly rectifying potassium channel KCNH2 from Cavia porcellus (Guinea pig).